A 608-amino-acid chain; its full sequence is Serine/arginine repetitive matrix protein 4 (608 aa).

2 disordered regions span residues 34–246 and 261–608; these read ASIT…PLPR and SAAD…STRR. Residues 78 to 100 show a composition bias toward basic and acidic residues; it reads GREKACRELDPARAHSASQDRDP. 2 stretches are compositionally biased toward basic residues: residues 107–123 and 131–187; these read RGKK…RRRS and VKKK…HRCP. A compositionally biased stretch (low complexity) spans 188-200; sequence SRSQSSELRSPSC. Basic and acidic residues predominate over residues 201–213; sequence ESRHRGRSPEEGR. Basic residues predominate over residues 214-228; it reads KSRRTHSRRCSKNHC. The segment covering 289–299 has biased composition (low complexity); the sequence is TSSPPSTQTSS. Residues 322–339 are compositionally biased toward polar residues; that stretch reads CGNTSDSGNSFTTSSPQN. Low complexity-rich tracts occupy residues 389-420 and 428-459; these read RSSS…SRST and SRSP…SRYS. Positions 460–477 are enriched in basic and acidic residues; sequence PSRERDLKYGEKEPQPRE. Positions 478–494 are enriched in basic residues; sequence RARRRRRSYSPMRKRRR. Positions 495-504 are enriched in basic and acidic residues; it reads DSPSHLEARR. Positions 518–555 are enriched in low complexity; that stretch reads PSPSSSSSLSSASSWYSSSSSSSSSSSRSPSRSYSRSR. Residues 556-573 are compositionally biased toward basic residues; that stretch reads SPSRSHSSRSQTRSRTRT. Low complexity predominate over residues 574 to 608; that stretch reads SRSSSSRSLSLGSRSRSRNRSLSYSSAESYASTRR.

The protein belongs to the nSR100 family. Phosphorylated. As to expression, specifically expressed in neuronal cells (at protein level). Expressed in adult nervous system and sensory organ tissues.

Its subcellular location is the nucleus. In terms of biological role, splicing factor specifically required for neural cell differentiation. Acts in conjunction with nPTB/PTBP2 by binding directly to its regulated target transcripts and promotes neural-specific exon inclusion in many genes that function in neural cell differentiation. Required to promote the inclusion of neural-specific exon 10 in nPTB/PTBP2, leading to increased expression of neural-specific nPTB/PTBP2. Also promotes the inclusion of exon 16 in DAAM1 in neuron extracts. Promotes alternative splicing of REST transcripts to produce REST isoform 2 (REST4) with greatly reduced repressive activity, thereby activating expression of REST targets in neural cells. Plays an important role during embryonic development as well as in the proper functioning of the adult nervous system. Regulates alternative splicing events in genes with important neuronal functions. This is Serine/arginine repetitive matrix protein 4 (Srrm4) from Mus musculus (Mouse).